Reading from the N-terminus, the 241-residue chain is Cobalt transport protein CbiM (241 aa).

Residues 1 to 23 (MKKNLTFFMVIALLFTITPNVYA) form the signal peptide. The next 6 helical transmembrane spans lie at 29 to 49 (GFLPPMWSGVYFVISAPFIII), 66 to 86 (MLLGLVAAYAFILSAMKIPSV), 98 to 118 (LSAIIFGPFISAIVGLIVLIF), 121 to 141 (ILLAHGGITTLGANTLSMGIM), 160 to 180 (VAVFLAATLGDLFTYFITSVQ), and 202 to 222 (IFSITQIPLAIMEGILTVIIF).

It belongs to the CbiM family. In terms of assembly, forms an energy-coupling factor (ECF) transporter complex composed of an ATP-binding protein (A component, CbiO), a transmembrane protein (T component, CbiQ) and 2 possible substrate-capture proteins (S components, CbiM and CbiN) of unknown stoichimetry.

It localises to the cell membrane. Its pathway is cofactor biosynthesis; adenosylcobalamin biosynthesis. In terms of biological role, part of the energy-coupling factor (ECF) transporter complex CbiMNOQ involved in cobalt import. This chain is Cobalt transport protein CbiM, found in Clostridium tetani (strain Massachusetts / E88).